A 140-amino-acid chain; its full sequence is uncharacterized protein (140 aa).

Residues 27-65 (LLGEVSELELQKICFNRSLRNEINQLEEQNDISFVRVER) adopt a coiled-coil conformation.

This is an uncharacterized protein from Pasteurella multocida (strain Pm70).